The chain runs to 850 residues: AdoMet-dependent rRNA methyltransferase SPB1 (850 aa).

G58, W60, D78, D94, and D119 together coordinate S-adenosyl-L-methionine. Catalysis depends on K159, which acts as the Proton acceptor. The segment covering 273-282 (GETNEMTWTP) has biased composition (polar residues). Disordered stretches follow at residues 273–305 (GETN…ARDE), 388–414 (IDKE…NEMK), 529–569 (GISD…RTLN), and 620–646 (AKKN…KQDD). The span at 388-400 (IDKELSELGEREK) shows a compositional bias: basic and acidic residues. Residues 397-425 (EREKARKKRERRRRNEMKQREIQRMQMNM) adopt a coiled-coil conformation. The segment covering 401 to 411 (ARKKRERRRRN) has biased composition (basic residues). Composition is skewed to acidic residues over residues 537–561 (DESD…DEDD) and 628–638 (SDSEDEEDDIV). A coiled-coil region spans residues 746-773 (LEAKGRKKMRALRRLEQMKKKSELINED). Residues 811 to 850 (KNKGIAGRPRGVTGKYKMVDGTMKKEQRAIRRIKKKMGKK) are disordered. A compositionally biased stretch (basic residues) spans 840 to 850 (IRRIKKKMGKK).

Belongs to the class I-like SAM-binding methyltransferase superfamily. RNA methyltransferase RlmE family. SPB1 subfamily. Component of the nucleolar and nucleoplasmic pre-60S ribosomal particle.

The protein resides in the nucleus. Its subcellular location is the nucleolus. The enzyme catalyses a ribonucleotide in rRNA + S-adenosyl-L-methionine = a 2'-O-methylribonucleotide in rRNA + S-adenosyl-L-homocysteine + H(+). Functionally, required for proper assembly of pre-ribosomal particles during the biogenesis of the 60S ribosomal subunit. The protein is AdoMet-dependent rRNA methyltransferase SPB1 of Yarrowia lipolytica (strain CLIB 122 / E 150) (Yeast).